Reading from the N-terminus, the 675-residue chain is Protein PALS1 (675 aa).

The segment at 1–78 is disordered; that stretch reads MTTSHMNGHV…RREEEGKKQE (78 aa). The tract at residues 1 to 345 is required for the correct localization of PALS1 and PATJ at cell-cell contacts and the normal formation of tight junctions and adherens junctions; the sequence is MTTSHMNGHV…QQIKPPPAKE (345 aa). 2 stretches are compositionally biased toward basic and acidic residues: residues 10–36 and 54–78; these read VTEESDNEVKNVDLASPEEHQKHREMA and AQLERIRQQQEDMRRRREEEGKKQE. Serine 14 and serine 25 each carry phosphoserine. The segment at 21–140 is interaction with PARD6B; sequence VDLASPEEHQ…LKHIQHTLVD (120 aa). Serine 83 and serine 84 each carry phosphoserine. L27 domains lie at 120-177 and 179-235; these read KILE…NKAS and PFPL…MQLE. The interval 181 to 243 is interaction with LIN7C; the sequence is PLISNAQDLA…LEPFTDERVY (63 aa). The 81-residue stretch at 256–336 folds into the PDZ domain; sequence IVRIEKARDI…TLTFVLIPSQ (81 aa). An SH3 domain is found at 345 to 417; that stretch reads ETVIHVKAHF…PGKSFQQQRE (73 aa). The Guanylate kinase-like domain occupies 479-660; the sequence is KRPIILIGPQ…AYQELLRLIN (182 aa). Residue 486–493 coordinates ATP; sequence GPQNCGQN.

It belongs to the MAGUK family. As to quaternary structure, heterodimer with MPP1. Forms a heterotrimeric complex composed of PALS1, LIN7B and PATJ; the N-terminal L27 domain of PALS1 interacts with the L27 domain of PATJ and the C-terminal L27 domain of PALS1 interacts with the L27 domain of LIN7B. Component of a complex composed of PALS1, CRB1 and MPP4. Component of a complex whose core is composed of ARHGAP17, AMOT, PALS1, PATJ and PARD3/PAR3. Component of a complex composed of PALS1, CRB1 and EPB41L5. Within the complex, interacts (via HOOK domain) with EPB41L5 (via FERM domain), and interacts with CRB1 (via intracellular domain). Component of a complex composed of PALS1, MPP3 and CRB1; PALS1 acts as a bridging protein between MPP3 (via guanylate kinase-like domain) and CRB1. Component of a complex composed of CRB3, PALS1 and PATJ. As part of the Crumbs complex; interacts with WWP1, the interaction is enhanced by AMOTL2 and facilitates WWP1 localization to the plasma membrane. The Crumbs complex promotes monoubiquitination of AMOTL2 by WWP1, which activates the Hippo signaling pathway. Interacts (via PDZ domain) with PATJ (via N-terminus). Interacts with EZR. Interacts (via PDZ domain) with CRB1 (via C-terminal ERLI motif). While the PDZ domain is sufficient for interaction with CRB1, the adjacent SH3 and guanylate kinase-like domains are likely to contribute to a high affinity interaction. Interacts with WWTR1/TAZ (via WW domain). Interacts with MPP7. Interacts (via PDZ domain) with CRB3 (via C-terminus). Interacts with LIN7C. Interacts with MPDZ. Interacts with PARD6B. Interacts with SC6A1. Interacts with CDH5; the interaction promotes PALS1 localization to cell junctions and is required for CDH5-mediated vascular lumen formation and endothelial cell. Interacts with NPHP1 (via coiled coil and SH3 domains). Interacts with NPHP4. Interacts with CRB2.

It localises to the golgi apparatus. The protein localises to the cell membrane. It is found in the endomembrane system. Its subcellular location is the cell junction. The protein resides in the tight junction. It localises to the adherens junction. The protein localises to the cell projection. It is found in the axon. Its subcellular location is the perikaryon. The protein resides in the apical cell membrane. In terms of biological role, plays a role in tight junction biogenesis and in the establishment of cell polarity in epithelial cells. Also involved in adherens junction biogenesis by ensuring correct localization of the exocyst complex protein EXOC4/SEC8 which allows trafficking of adherens junction structural component CDH1 to the cell surface. Plays a role through its interaction with CDH5 in vascular lumen formation and endothelial membrane polarity. Required during embryonic and postnatal retinal development. Required for the maintenance of cerebellar progenitor cells in an undifferentiated proliferative state, preventing premature differentiation, and is required for cerebellar histogenesis, fissure formation, cerebellar layer organization and cortical development. Plays a role in neuronal progenitor cell survival, potentially via promotion of mTOR signaling. Plays a role in the radial and longitudinal extension of the myelin sheath in Schwann cells. May modulate SC6A1/GAT1-mediated GABA uptake by stabilizing the transporter. May play a role in the T-cell receptor-mediated activation of NF-kappa-B. Required for localization of EZR to the apical membrane of parietal cells and may play a role in the dynamic remodeling of the apical cytoskeleton. Required for the normal polarized localization of the vesicular marker STX4. Required for the correct trafficking of the myelin proteins PMP22 and MAG. Involved in promoting phosphorylation and cytoplasmic retention of transcriptional coactivators YAP1 and WWTR1/TAZ which leads to suppression of TGFB1-dependent transcription of target genes such as CCN2/CTGF, SERPINE1/PAI1, SNAI1/SNAIL1 and SMAD7. The chain is Protein PALS1 from Canis lupus familiaris (Dog).